A 455-amino-acid chain; its full sequence is tRNA modification GTPase MnmE (455 aa).

(6S)-5-formyl-5,6,7,8-tetrahydrofolate contacts are provided by arginine 25, glutamate 85, and arginine 124. The TrmE-type G domain maps to 221 to 375 (GLSTAIIGRP…IEERINKLFF (155 aa)). Asparagine 231 serves as a coordination point for K(+). GTP is bound by residues 231–236 (NVGKSS), 250–256 (TDIEGTT), and 275–278 (DTAG). Serine 235 is a Mg(2+) binding site. Positions 250, 252, and 255 each coordinate K(+). Residue threonine 256 coordinates Mg(2+). Residue lysine 455 participates in (6S)-5-formyl-5,6,7,8-tetrahydrofolate binding.

Belongs to the TRAFAC class TrmE-Era-EngA-EngB-Septin-like GTPase superfamily. TrmE GTPase family. In terms of assembly, homodimer. Heterotetramer of two MnmE and two MnmG subunits. The cofactor is K(+).

Its subcellular location is the cytoplasm. Functionally, exhibits a very high intrinsic GTPase hydrolysis rate. Involved in the addition of a carboxymethylaminomethyl (cmnm) group at the wobble position (U34) of certain tRNAs, forming tRNA-cmnm(5)s(2)U34. The chain is tRNA modification GTPase MnmE from Streptococcus mutans serotype c (strain ATCC 700610 / UA159).